The primary structure comprises 435 residues: Beta-arrestin arr-1 (435 aa).

Residues 358 to 382 (LTHSKPPESPERTDRGLPSIEATNG) form a disordered region. Basic and acidic residues predominate over residues 362–372 (KPPESPERTDR). The Clathrin box signature appears at 390 to 394 (LIQLH). Residues 404-414 (DLIFEDFARMR) carry the [DE]-X(1,2)-F-X-X-[FL]-X-X-X-R motif motif. The tract at residues 416–435 (HGNDSEDQPSPSANLPPSLL) is disordered. Residues 424-435 (PSPSANLPPSLL) show a composition bias toward low complexity.

This sequence belongs to the arrestin family. In terms of assembly, component of a complex composed of arr-1, daf-18 and mpz-1. Within the complex, interacts (via C-terminus) with mpz-1 (via PDZ domain) and phosphatase daf-18. May interact (via C-terminus) with clathrin chc-1 and beta-2 adaptin (AP2) apb-1. In terms of tissue distribution, expressed in head neurons, nerve ring and ventral nerve cord (at protein level). Expressed in the nervous system including the nerve ring and the ventral and dorsal nerve cords. Highly expressed in amphid chemosensory neurons AWA, AWB, AWC, ADL and ASH, and in hermaphrodite specific neuron HSN. Also expressed in the intestine.

It is found in the perikaryon. The protein localises to the cell projection. Its subcellular location is the dendrite. Its function is as follows. Adapter protein required for olfactory adaptation and recovery to volatile odorants, probably by desensitization of G-protein coupled receptors (GPCR). May play a role in clathrin-mediated GPCR endocytosis. Acts as a positive regulator of insulin-like daf-2 signaling pathway probably by forming a complex with mpz-1 and phosphatase daf-18 likely resulting in daf-18 inhibition. Involved in egg-laying. In Caenorhabditis elegans, this protein is Beta-arrestin arr-1.